We begin with the raw amino-acid sequence, 269 residues long: Protein TIFY 11B (269 aa).

In terms of domain architecture, Tify spans 100 to 135 (PESGNSQLTIFFGGKVMVFNEFPEDKAKEIMEVAKE). Residues 160 to 181 (PDLNEPTSSGNNEDQETGQQHQ) are disordered. Residues 164-181 (EPTSSGNNEDQETGQQHQ) show a composition bias toward polar residues. The Jas motif lies at 186-210 (IARRASLHRFFAKRKDRAVARAPYQ). A Nuclear localization signal motif is present at residues 187 to 194 (ARRASLHR). The disordered stretch occupies residues 209–269 (YQVNQHGSHL…QSSKNLELKL (61 aa)). The segment covering 250–269 (MPMEVDKKEGQSSKNLELKL) has biased composition (basic and acidic residues).

This sequence belongs to the TIFY/JAZ family. Homo- and heterodimer. Interacts with MYC2, AFPH2/NINJA, TIFY10A/JAZ1, TIFY10B/JAZ2, TIFY11A/JAZ5, TIFY5A/JAZ8, TIFY9/JAZ10 and TIFY3B/JAZ12. In terms of assembly, (Microbial infection) Interacts with the pathogenic Pseudomonas syringae HopZ1a protein. Post-translationally, (Microbial infection) Acetylated by Pseudomonas syringae HopZ1a. Ubiquitinated. Targeted for degradation by the SCF(COI1) E3 ubiquitin ligase-proteasome pathway during jasmonate signaling.

Its subcellular location is the nucleus. It localises to the cell membrane. Functionally, repressor of jasmonate responses. The chain is Protein TIFY 11B from Arabidopsis thaliana (Mouse-ear cress).